The primary structure comprises 158 residues: Disease resistance response protein Pi49 (158 aa).

Belongs to the BetVI family.

The sequence is that of Disease resistance response protein Pi49 (DRR49A) from Pisum sativum (Garden pea).